A 665-amino-acid polypeptide reads, in one-letter code: Cysteine-rich receptor-like protein kinase 41 (665 aa).

Residues 1–27 (MTSSCSLSRPQHLFFFFFLFVPFLSLG) form the signal peptide. The Extracellular segment spans residues 28 to 280 (QQISVDINSA…DPKPGNDKVK (253 aa)). 2 consecutive Gnk2-homologous domains span residues 42-148 (PSNP…DKPI) and 154-260 (TSPV…SDLR). N120, N165, and N236 each carry an N-linked (GlcNAc...) asparagine glycan. The helical transmembrane segment at 281–301 (IIIATVCSVIGFAIIAVFLYF) threads the bilayer. The Cytoplasmic portion of the chain corresponds to 302-665 (FMTRNRRTAK…DVTITEFDAR (364 aa)). The Protein kinase domain maps to 344–624 (FSRDNQLGEG…VVMLNANSFT (281 aa)). Residues 350–358 (LGEGGFGAV) and K372 each bind ATP. Y417 carries the post-translational modification Phosphotyrosine. D469 (proton acceptor) is an active-site residue. Position 473 is a phosphoserine (S473). T511 carries the post-translational modification Phosphothreonine. Y519 bears the Phosphotyrosine mark.

It belongs to the protein kinase superfamily. Ser/Thr protein kinase family. CRK subfamily.

It localises to the membrane. It catalyses the reaction L-seryl-[protein] + ATP = O-phospho-L-seryl-[protein] + ADP + H(+). It carries out the reaction L-threonyl-[protein] + ATP = O-phospho-L-threonyl-[protein] + ADP + H(+). The polypeptide is Cysteine-rich receptor-like protein kinase 41 (CRK41) (Arabidopsis thaliana (Mouse-ear cress)).